Reading from the N-terminus, the 215-residue chain is Protein-methionine-sulfoxide reductase heme-binding subunit MsrQ (215 aa).

The next 6 helical transmembrane spans lie at 17–37 (AAIW…FYLA), 50–70 (FEHL…LVTP), 85–105 (ALGL…LVLD), 121–141 (PYIM…LTSN), 152–172 (WNTL…HFVL), and 177–197 (ITLE…YRLV).

This sequence belongs to the MsrQ family. In terms of assembly, heterodimer of a catalytic subunit (MsrP) and a heme-binding subunit (MsrQ). FMN is required as a cofactor. Requires heme b as cofactor.

The protein localises to the cell inner membrane. Functionally, part of the MsrPQ system that repairs oxidized periplasmic proteins containing methionine sulfoxide residues (Met-O), using respiratory chain electrons. Thus protects these proteins from oxidative-stress damage caused by reactive species of oxygen and chlorine generated by the host defense mechanisms. MsrPQ is essential for the maintenance of envelope integrity under bleach stress, rescuing a wide series of structurally unrelated periplasmic proteins from methionine oxidation. MsrQ provides electrons for reduction to the reductase catalytic subunit MsrP, using the quinone pool of the respiratory chain. The polypeptide is Protein-methionine-sulfoxide reductase heme-binding subunit MsrQ (Agrobacterium fabrum (strain C58 / ATCC 33970) (Agrobacterium tumefaciens (strain C58))).